The following is a 94-amino-acid chain: MEHTDVVIAPVLTEKSNALRQQGKYVFRVAARATKIQIKQAVTQLFGVTVRRCTVMNVFGKKRRVRHRTGRTSGWKKAIVHVAAGQSIGVLERA.

The protein belongs to the universal ribosomal protein uL23 family. In terms of assembly, part of the 50S ribosomal subunit. Contacts protein L29, and trigger factor when it is bound to the ribosome.

In terms of biological role, one of the early assembly proteins it binds 23S rRNA. One of the proteins that surrounds the polypeptide exit tunnel on the outside of the ribosome. Forms the main docking site for trigger factor binding to the ribosome. In Treponema pallidum (strain Nichols), this protein is Large ribosomal subunit protein uL23.